Consider the following 610-residue polypeptide: Dopamine beta-hydroxylase (610 aa).

Topologically, residues 1–9 are cytoplasmic; sequence MKVPSPSVR. Residues 10–30 traverse the membrane as a helical; Signal-anchor for type II membrane protein segment; it reads EAASMYGTAVAIFLVILVAAL. At 31–610 the chain is on the intragranular side; that stretch reads QGSEPPESPF…TVVDIGGGKG (580 aa). The DOMON domain occupies 50 to 166; that stretch reads GTLELSWNVS…GTVHLVYGIL (117 aa). Asparagine 57, asparagine 177, and asparagine 194 each carry an N-linked (GlcNAc...) asparagine glycan. 6 cysteine pairs are disulfide-bonded: cysteine 147–cysteine 589, cysteine 225–cysteine 276, cysteine 262–cysteine 288, cysteine 383–cysteine 496, cysteine 387–cysteine 558, and cysteine 459–cysteine 481. The active site involves tyrosine 223. The Cu(2+) site is built by histidine 255 and histidine 256. The Cu(2+) site is built by histidine 326, histidine 405, histidine 407, and methionine 480. The active site involves histidine 405. The tract at residues 586-610 is disordered; sequence TPRCPASRGRSPAGPTVVDIGGGKG.

It belongs to the copper type II ascorbate-dependent monooxygenase family. Homotetramer; composed of two disulfide-linked dimers. Cu(2+) serves as cofactor. In terms of processing, proteolytic cleavage after the membrane-anchor leads to the release of the soluble form. N-glycosylated. As to expression, detected in adrenal medulla chromaffin cells.

Its subcellular location is the cytoplasmic vesicle. It localises to the secretory vesicle lumen. The protein localises to the secretory vesicle. It is found in the chromaffin granule lumen. The protein resides in the secreted. Its subcellular location is the secretory vesicle membrane. It localises to the chromaffin granule membrane. It catalyses the reaction dopamine + 2 L-ascorbate + O2 = (R)-noradrenaline + 2 monodehydro-L-ascorbate radical + H2O. Its pathway is catecholamine biosynthesis; (R)-noradrenaline biosynthesis; (R)-noradrenaline from dopamine: step 1/1. Its function is as follows. Catalyzes the hydroxylation of dopamine to noradrenaline (also known as norepinephrine), and is thus vital for regulation of these neurotransmitters. In Equus caballus (Horse), this protein is Dopamine beta-hydroxylase (DBH).